We begin with the raw amino-acid sequence, 128 residues long: Small ribosomal subunit protein uS8c (128 aa).

It belongs to the universal ribosomal protein uS8 family. Part of the 30S ribosomal subunit.

The protein localises to the plastid. The protein resides in the chloroplast. One of the primary rRNA binding proteins, it binds directly to 16S rRNA central domain where it helps coordinate assembly of the platform of the 30S subunit. The polypeptide is Small ribosomal subunit protein uS8c (rps8) (Gnetum parvifolium (Small-leaved jointfir)).